Here is a 1205-residue protein sequence, read N- to C-terminus: PAN2-PAN3 deadenylation complex catalytic subunit Pan2 (1205 aa).

WD repeat units lie at residues 153–193 (DESE…QKYA), 195–231 (ETPG…VEHE), 244–280 (VHGN…AITP), and 328–367 (PVGP…SFNP). Positions 368 to 484 (YSRETEFALP…PTGREEEPLH (117 aa)) are linker. Residues 485-924 (TVSKKYRKVT…VPAILYYVKR (440 aa)) form the USP domain. Position 784 is a phosphoserine (S784). The 173-residue stretch at 975–1147 (VGLDAEFVTL…EDARTALQLY (173 aa)) folds into the Exonuclease domain. Residues D978, E980, D1087, and D1139 each contribute to the a divalent metal cation site. The interval 1179–1205 (WKVPEPESQSSPKSKAGLRPGALGWVG) is disordered. Residues 1184-1193 (PESQSSPKSK) show a composition bias toward low complexity. S1189 bears the Phosphoserine mark.

This sequence belongs to the peptidase C19 family. PAN2 subfamily. As to quaternary structure, forms a heterotrimer with an asymmetric homodimer of the regulatory subunit PAN3 to form the poly(A)-nuclease (PAN) deadenylation complex. Interacts with PAN3 isoform 1/Pan3L and isoform 3/Pan3S. Interacts with ZFP36. A divalent metal cation is required as a cofactor.

The protein resides in the cytoplasm. Its subcellular location is the P-body. It localises to the nucleus. It carries out the reaction Exonucleolytic cleavage of poly(A) to 5'-AMP.. Positively regulated by the regulatory subunit PAN3. Catalytic subunit of the poly(A)-nuclease (PAN) deadenylation complex, one of two cytoplasmic mRNA deadenylases involved in general and miRNA-mediated mRNA turnover. PAN specifically shortens poly(A) tails of RNA and the activity is stimulated by poly(A)-binding protein (PABP). PAN deadenylation is followed by rapid degradation of the shortened mRNA tails by the CCR4-NOT complex. Deadenylated mRNAs are then degraded by two alternative mechanisms, namely exosome-mediated 3'-5' exonucleolytic degradation, or deadenylation-dependent mRNA decaping and subsequent 5'-3' exonucleolytic degradation by XRN1. Also acts as an important regulator of the HIF1A-mediated hypoxic response. Required for HIF1A mRNA stability independent of poly(A) tail length regulation. The chain is PAN2-PAN3 deadenylation complex catalytic subunit Pan2 from Rattus norvegicus (Rat).